The primary structure comprises 401 residues: Beta-ketoadipyl-CoA thiolase (401 aa).

Cys90 serves as the catalytic Acyl-thioester intermediate. Residues His357 and Cys387 each act as proton acceptor in the active site.

It belongs to the thiolase-like superfamily. Thiolase family.

It catalyses the reaction succinyl-CoA + acetyl-CoA = 3-oxoadipyl-CoA + CoA. It functions in the pathway aromatic compound metabolism; beta-ketoadipate pathway; acetyl-CoA and succinyl-CoA from 3-oxoadipate: step 2/2. In terms of biological role, catalyzes thiolytic cleavage of beta-ketoadipyl-CoA to succinyl-CoA and acetyl-CoA. The polypeptide is Beta-ketoadipyl-CoA thiolase (pcaF) (Acinetobacter baylyi (strain ATCC 33305 / BD413 / ADP1)).